The sequence spans 197 residues: Probable inosine/xanthosine triphosphatase (197 aa).

Position 9-14 (threonine 9–lysine 14) interacts with substrate. Mg(2+) is bound by residues aspartate 36 and aspartate 65.

Belongs to the YjjX NTPase family. In terms of assembly, homodimer. Mg(2+) serves as cofactor. Mn(2+) is required as a cofactor.

The catalysed reaction is XTP + H2O = XDP + phosphate + H(+). The enzyme catalyses ITP + H2O = IDP + phosphate + H(+). In terms of biological role, phosphatase that hydrolyzes non-canonical purine nucleotides such as XTP and ITP to their respective diphosphate derivatives. Probably excludes non-canonical purines from DNA/RNA precursor pool, thus preventing their incorporation into DNA/RNA and avoiding chromosomal lesions. This chain is Probable inosine/xanthosine triphosphatase, found in Aeropyrum pernix (strain ATCC 700893 / DSM 11879 / JCM 9820 / NBRC 100138 / K1).